A 962-amino-acid polypeptide reads, in one-letter code: Putative primase C962R (962 aa).

The 169-residue stretch at 607–775 (ELDARLWIMF…PDPNNSYEKK (169 aa)) folds into the SF3 helicase domain. Position 636-643 (636-643 (GGGCNGKT)) interacts with ATP.

The protein belongs to the asfivirus helicase C962R family.

This African swine fever virus (isolate Warthog/Namibia/Wart80/1980) (ASFV) protein is Putative primase C962R.